The sequence spans 92 residues: Small ribosomal subunit protein uS19 (92 aa).

Belongs to the universal ribosomal protein uS19 family.

Its function is as follows. Protein S19 forms a complex with S13 that binds strongly to the 16S ribosomal RNA. The polypeptide is Small ribosomal subunit protein uS19 (Bradyrhizobium sp. (strain BTAi1 / ATCC BAA-1182)).